The primary structure comprises 160 residues: Eukaryotic translation initiation factor 5A-1/2 (160 aa).

Positions 1-12 (MSDEEHHFESKA) are enriched in basic and acidic residues. Positions 1 to 21 (MSDEEHHFESKADAGASKTYP) are disordered. K52 is modified (hypusine).

The protein belongs to the eIF-5A family. Lys-52 undergoes hypusination, a unique post-translational modification that consists in the addition of a butylamino group from spermidine to lysine side chain, leading to the formation of the unusual amino acid hypusine. eIF-5As are the only known proteins to undergo this modification, which is essential for their function.

Translation factor that promotes translation elongation and termination, particularly upon ribosome stalling at specific amino acid sequence contexts. Binds between the exit (E) and peptidyl (P) site of the ribosome and promotes rescue of stalled ribosome: specifically required for efficient translation of polyproline-containing peptides as well as other motifs that stall the ribosome. Acts as a ribosome quality control (RQC) cofactor by joining the RQC complex to facilitate peptidyl transfer during CAT tailing step. This chain is Eukaryotic translation initiation factor 5A-1/2 (EIF5A1), found in Solanum tuberosum (Potato).